A 618-amino-acid chain; its full sequence is Cationic amino acid transporter 3 (618 aa).

Over 1-36 (MLWQALRRFGQKLVRRRVLELGMGETRLARCLSTLD) the chain is Cytoplasmic. The chain crosses the membrane as a helical span at residues 37–57 (LVALGVGSTLGAGVYVLAGEV). Residues 58–61 (AKDK) are Extracellular-facing. A helical transmembrane segment spans residues 62–82 (AGPSIVICFLVAALSSVLAGL). Residues 83 to 107 (CYAEFGARVPGSGSAYLYSYVTVGE) are Cytoplasmic-facing. The chain crosses the membrane as a helical span at residues 108–128 (LWAFTTGWNLILSYVIGTASV). The Extracellular segment spans residues 129-162 (ARAWSSAFDNLIGNHISRTLKGTILLKMPHVLAE). Residues 163–183 (YPDFFALALVLLLTGLLVLGA) form a helical membrane-spanning segment. Residues 184–191 (SKSALVTK) are Cytoplasmic-facing. The helical transmembrane segment at 192-212 (VFTGMNLLVLSFVIISGFIKG) threads the bilayer. Residues 213-244 (ELRNWKLTKEDYCLTMSESNGTCSLDSMGSGG) lie on the Extracellular side of the membrane. N-linked (GlcNAc...) asparagine glycosylation occurs at Asn-232. A helical transmembrane segment spans residues 245–265 (FMPFGLEGILRGAATCFYAFV). The Cytoplasmic segment spans residues 266-285 (GFDCIATTGEEAQNPQRSIP). Residues 286–306 (MGIVISMFICFLAYFGVSSAL) form a helical membrane-spanning segment. Residues 307–335 (TLMMPYYKLHPESPLPEAFSYVGWEPARY) are Extracellular-facing. The helical transmembrane segment at 336 to 356 (LVAIGSLCALSTSLLGSMFPM) threads the bilayer. Residues 357-380 (PRVMYSMAEDGLLFRVLAKVHSVT) lie on the Cytoplasmic side of the membrane. Residues 381–401 (HIPIVATLVSGVIAAFMAFLF) traverse the membrane as a helical segment. At 402 to 406 (ELTDL) the chain is on the extracellular side. A helical membrane pass occupies residues 407–427 (VDLMSIGTLLAHSLVSICVLI). Residues 428–474 (LRYQPDQEMKSVEEEMELQEETLEAEKLTVQALFCPVNSIPTLLSGR) lie on the Cytoplasmic side of the membrane. Residues 475–495 (VVYVCSSLLAVLLTVLCLVLT) form a helical membrane-spanning segment. Topologically, residues 496–506 (WWTTPLRSGDP) are extracellular. The helical transmembrane segment at 507-527 (VWVTVVVLILGLILAISGVIW) threads the bilayer. Residues 528 to 539 (RQPQNRTPLHFK) lie on the Cytoplasmic side of the membrane. The chain crosses the membrane as a helical span at residues 540–560 (VPAVPLLPLVSIFVNVYLMMQ). At 561 to 568 (MTAGTWAR) the chain is on the extracellular side. Residues 569–589 (FGIWMLIGFAIYFGYGIQHSM) traverse the membrane as a helical segment. The Cytoplasmic segment spans residues 590-618 (KEVKNHQTLPKTRAQTIDLDLTTSCVHSI). Phosphothreonine is present on Thr-605. Ser-617 is subject to Phosphoserine.

Belongs to the amino acid-polyamine-organocation (APC) superfamily. Cationic amino acid transporter (CAT) (TC 2.A.3.3) family. Post-translationally, N-glycosylated. As to expression, expressed in adult brain and in a wide variety of embryonic tissues.

The protein localises to the cell membrane. The catalysed reaction is L-arginine(in) = L-arginine(out). The enzyme catalyses L-lysine(in) = L-lysine(out). It carries out the reaction L-ornithine(in) = L-ornithine(out). Its function is as follows. Uniporter that mediates the uptake of cationic L-amino acids such as L-arginine, L-lysine and L-ornithine. The transport is sodium ions- and pH-independent, moderately trans-stimulated and is mediated by passive diffusion. The protein is Cationic amino acid transporter 3 of Mus musculus (Mouse).